The primary structure comprises 237 residues: DNA replication inhibitor toxin SocB (237 aa).

As to quaternary structure, interacts with cognate antitoxin SocA and with beta sliding clamp (dnaN). Degraded by ClpXP, recognition of SocB by ClpX requires SocA.

It is found in the cytoplasm. Its function is as follows. Toxic component of an atypical type II toxin-antitoxin (TA) system. Upon overexpression in the absence of its cognate antitoxin SocA, leads to inhibition of colony formation, cellular filamentation, incomplete DNA replication and induction of the SOS response. Exercises toxicity by binding the beta sliding clamp (dnaN), blocking DNA replication and leading to premature replication fork collapse and incomplete cell division. Unlike most type II TA systems, the SocB toxin is unstable and targeted by its cognate antitoxin SocA for degradation by ClpXP. Not toxic upon expression in E.coli. This is DNA replication inhibitor toxin SocB from Caulobacter vibrioides (strain NA1000 / CB15N) (Caulobacter crescentus).